The primary structure comprises 146 residues: Hemoglobin subunit beta-2 (146 aa).

Val1 is modified (N-acetylvaline). A Globin domain is found at 2 to 146 (HLHGDEKAAV…VASALAHKYH (145 aa)). The residue at position 17 (Lys17) is an N6-succinyllysine. Ser44 is modified (phosphoserine). Lys59 carries the N6-succinyllysine modification. Heme b contacts are provided by His63 and His92. Position 104 is an asymmetric dimethylarginine (Arg104). Thr123 bears the Phosphothreonine mark.

The protein belongs to the globin family. Heterotetramer of two alpha chains and two beta chains. Red blood cells.

Involved in oxygen transport from the lung to the various peripheral tissues. This chain is Hemoglobin subunit beta-2 (HBB2), found in Tapirus terrestris (Lowland tapir).